A 304-amino-acid polypeptide reads, in one-letter code: Acetylglutamate kinase (304 aa).

Substrate contacts are provided by residues 82–83 (GG), arginine 104, and asparagine 197.

Belongs to the acetylglutamate kinase family. ArgB subfamily.

The protein resides in the cytoplasm. It catalyses the reaction N-acetyl-L-glutamate + ATP = N-acetyl-L-glutamyl 5-phosphate + ADP. Its pathway is amino-acid biosynthesis; L-arginine biosynthesis; N(2)-acetyl-L-ornithine from L-glutamate: step 2/4. Its function is as follows. Catalyzes the ATP-dependent phosphorylation of N-acetyl-L-glutamate. The sequence is that of Acetylglutamate kinase from Prochlorococcus marinus (strain NATL2A).